Reading from the N-terminus, the 384-residue chain is Autophagy-related protein 25 (384 aa).

2 coiled-coil regions span residues 132–236 (KETA…RRAS) and 342–379 (KKNNQTDKDQEIASLRNRLSEMEQNYERVLATMEQWKT). The interval 224-247 (ESRLSNMNKRRASPRDDAEAEPKR) is disordered. The segment covering 236–247 (SPRDDAEAEPKR) has biased composition (basic and acidic residues).

It belongs to the ADIP family.

The protein resides in the preautophagosomal structure membrane. Functionally, specifically required for selective degradation of peroxisomes via macropexophagy. In Pichia angusta (Yeast), this protein is Autophagy-related protein 25 (ATG25).